Reading from the N-terminus, the 170-residue chain is Protein SprT (170 aa).

The SprT-like domain occupies 22 to 165 (LQLANQHLGT…RQCGEKLQFI (144 aa)). Residue His78 coordinates Zn(2+). The active site involves Glu79. His82 provides a ligand contact to Zn(2+).

The protein belongs to the SprT family. The cofactor is Zn(2+).

The protein resides in the cytoplasm. The polypeptide is Protein SprT (Yersinia pseudotuberculosis serotype IB (strain PB1/+)).